Reading from the N-terminus, the 89-residue chain is MAISREKKTELINKYARHEGDTGSVEVQVAVLTEDINELNEHLRVHKKDFHSQRGLMKKIGHRRNLLAYLRKEDVNRYRDLIQSLGLRR.

Belongs to the universal ribosomal protein uS15 family. Part of the 30S ribosomal subunit. Forms a bridge to the 50S subunit in the 70S ribosome, contacting the 23S rRNA.

Its function is as follows. One of the primary rRNA binding proteins, it binds directly to 16S rRNA where it helps nucleate assembly of the platform of the 30S subunit by binding and bridging several RNA helices of the 16S rRNA. Functionally, forms an intersubunit bridge (bridge B4) with the 23S rRNA of the 50S subunit in the ribosome. The sequence is that of Small ribosomal subunit protein uS15 from Lactiplantibacillus plantarum (strain ATCC BAA-793 / NCIMB 8826 / WCFS1) (Lactobacillus plantarum).